We begin with the raw amino-acid sequence, 308 residues long: Putative transcription elongation factor S-II (308 aa).

In terms of domain architecture, TFIIS N-terminal spans Glu-5–Lys-84. A disordered region spans residues Asp-82–Arg-126. Residues Glu-102–Ser-125 show a composition bias toward basic and acidic residues. One can recognise a TFIIS central domain in the interval Thr-148–Thr-263. The TFIIS-type zinc-finger motif lies at Asp-266–Lys-306. Residues Cys-270, Cys-273, Cys-298, and Cys-301 each contribute to the Zn(2+) site.

Belongs to the TFS-II family.

Its subcellular location is the nucleus. Its function is as follows. Necessary for efficient RNA polymerase II transcription elongation past template-encoded arresting sites. The arresting sites in DNA have the property of trapping a certain fraction of elongating RNA polymerases that pass through, resulting in locked ternary complexes. Cleavage of the nascent transcript by S-II allows the resumption of elongation from the new 3'-terminus. The protein is Putative transcription elongation factor S-II of Caenorhabditis elegans.